A 260-amino-acid chain; its full sequence is Triosephosphate isomerase (260 aa).

11–13 is a substrate binding site; the sequence is NWK. Residue His103 is the Electrophile of the active site. The Proton acceptor role is filled by Glu175. Substrate contacts are provided by residues Gly181, Ser220, and 241 to 242; that span reads GG.

The protein belongs to the triosephosphate isomerase family. As to quaternary structure, homodimer.

The protein localises to the cytoplasm. It carries out the reaction D-glyceraldehyde 3-phosphate = dihydroxyacetone phosphate. Its pathway is carbohydrate biosynthesis; gluconeogenesis. The protein operates within carbohydrate degradation; glycolysis; D-glyceraldehyde 3-phosphate from glycerone phosphate: step 1/1. Its function is as follows. Involved in the gluconeogenesis. Catalyzes stereospecifically the conversion of dihydroxyacetone phosphate (DHAP) to D-glyceraldehyde-3-phosphate (G3P). In Shewanella woodyi (strain ATCC 51908 / MS32), this protein is Triosephosphate isomerase.